Reading from the N-terminus, the 1360-residue chain is TRAF2 and NCK-interacting protein kinase (1360 aa).

The Protein kinase domain occupies 25 to 289 (FELVELVGNG…TEQLMKHPFI (265 aa)). Residues 31-39 (VGNGTYGQV) and K54 contribute to the ATP site. The Proton acceptor role is filled by D153. The residue at position 187 (T187) is a Phosphothreonine. Disordered regions lie at residues 284–347 (MKHP…LPGE), 398–440 (QKEQ…RRRA), and 539–589 (ERSR…RPVD). The segment covering 288–307 (FIRDQPNERQVRIQLKDHID) has biased composition (basic and acidic residues). The tract at residues 290–1047 (RDQPNERQVR…EIRKYKKRFN (758 aa)) is mediates interaction with NEDD4. Acidic residues predominate over residues 317 to 335 (DETEYEYSGSEEEEEENDS). Phosphoserine occurs at positions 324 and 326. 2 positions are modified to phosphoserine: S560 and S570. T581 carries the phosphothreonine modification. Residues S600, S608, S610, and S640 each carry the phosphoserine modification. Disordered regions lie at residues 601 to 801 (QGPA…KAID), 814 to 878 (LRIE…YNVG), 908 to 927 (TSGEKKRSGHSDSNGFAGHI), and 933 to 998 (VQQS…ESSA). Over residues 652-669 (RIEKFDRSSWLRQEEDIP) the composition is skewed to basic and acidic residues. S678, S680, S688, S701, S707, S720, S764, S766, and S769 each carry phosphoserine. The segment covering 720–755 (SPLQRTSSGSSSSSSTPSSQPSSQGGSQPGSQAGSS) has biased composition (low complexity). Composition is skewed to basic and acidic residues over residues 775–789 (EPAKVKPEESRDITR) and 814–827 (LRIEETNRPMKKVT). Acidic residues predominate over residues 834 to 847 (EESESSEEEEEDGE). The span at 908–917 (TSGEKKRSGH) shows a compositional bias: basic and acidic residues. At S959 the chain carries Phosphoserine. Residues 987–996 (TDEDEEDEES) are compositionally biased toward acidic residues. Residues 1047-1334 (NSEILCAALW…KFLCERNDKV (288 aa)) enclose the CNH domain.

Belongs to the protein kinase superfamily. STE Ser/Thr protein kinase family. STE20 subfamily. In terms of assembly, interacts (via the CNH domain) with RAP2A (GTP-bound form preferentially); the interaction is direct and required for the activation of TNIK by RAP2A. Interacts with NEDD4; recruits RAP2A to NEDD4. Interacts with TRAF2 and NCK. Interacts with TCF7L2/TCF4 and CTNNB1; the interaction is direct. Interacts with TANC1. Autophosphorylated. Autophosphorylation is activated by RAP2A and induces association to the cytoskeletal fraction. As to expression, expressed ubiquitously. Highest levels observed in heart, brain and skeletal muscle. Expressed in normal colonic epithelia and colorectal cancer tissues.

The protein resides in the nucleus. The protein localises to the cytoplasm. It is found in the recycling endosome. It localises to the cytoskeleton. It catalyses the reaction L-seryl-[protein] + ATP = O-phospho-L-seryl-[protein] + ADP + H(+). It carries out the reaction L-threonyl-[protein] + ATP = O-phospho-L-threonyl-[protein] + ADP + H(+). Serine/threonine kinase that acts as an essential activator of the Wnt signaling pathway. Recruited to promoters of Wnt target genes and required to activate their expression. May act by phosphorylating TCF4/TCF7L2. Appears to act upstream of the JUN N-terminal pathway. May play a role in the response to environmental stress. Part of a signaling complex composed of NEDD4, RAP2A and TNIK which regulates neuronal dendrite extension and arborization during development. More generally, it may play a role in cytoskeletal rearrangements and regulate cell spreading. Phosphorylates SMAD1 on Thr-322. Activator of the Hippo signaling pathway which plays a pivotal role in organ size control and tumor suppression by restricting proliferation and promoting apoptosis. MAP4Ks act in parallel to and are partially redundant with STK3/MST2 and STK4/MST2 in the phosphorylation and activation of LATS1/2, and establish MAP4Ks as components of the expanded Hippo pathway. The chain is TRAF2 and NCK-interacting protein kinase from Homo sapiens (Human).